A 364-amino-acid chain; its full sequence is MIIEELHIVNFKSIAAADCRFSPKVNCLVGNNGMGKTNLLDALHFLSFCRSHLSVPDNMVVRHGEEMALLQGLYRDESGDGIELLLSIRPGKHKVLRRNKKEYERLSDHIGRFPLVIVSPQDYQLILGGSDERRRFMDQQLCQQDPRYLSALIQYNRHLQQRNTMLKQDRHDDALMDVLELQMGSYAAEICNKRSRFIEDFLPVFNDLYSDISGSAEKVSLSYRSHLADGIPLEELLRRSRPKDYLLGFSSCGVHKDELEMLLGGVLIRKIGSEGQNKTFLISMKLAQFRHQQLHGDETPILLLDDIFDKLDATRVERIIRLVGGNGFGQIFITDTNRKNLDEIIASWSEDYRLFKIENGQIFQ.

An ATP-binding site is contributed by 30–37 (GNNGMGKT).

This sequence belongs to the RecF family.

The protein resides in the cytoplasm. Its function is as follows. The RecF protein is involved in DNA metabolism; it is required for DNA replication and normal SOS inducibility. RecF binds preferentially to single-stranded, linear DNA. It also seems to bind ATP. The protein is DNA replication and repair protein RecF of Porphyromonas gingivalis (strain ATCC BAA-308 / W83).